Consider the following 878-residue polypeptide: MNEQYSAMRSNVSMLGTLLGDTIKEALGEHILDRVETIRKLSKSSRAGNEASRQELLTTLQNLSNDELLPVARAFSQFLNLTNTAEQYHSISPHGEAASNPEALAQLFTRLKDKKLSDQDMRSAVDDLSIELVLTAHPTEITRRTLIHKLVEVNTCLSQLDHNDLADYERNKIMRRLRQLVAQSWHTDEIRKLRPSPVDEAKWGFAVVENSLWEGVPAFLREFNEQLENSLDYRLPVEAVPIRFTSWMGGDRDGNPNVTAEITRHVLLLSRWKATDLFLRDIQVLVSELSMSECTPELRELAGGEEVLEPYRQLMKNVRTQLTNTQAYLEARLKGERVLPPHDLLVSNDQLWEPLYACYQSLKACGMEIIANGQLLDTLRRVRCFGVPLVRIDVRQESTRHTDAIAELTRYLGLGDYESWSESDKQAFLVRELNSKRPLVPLKWEPSAETQEVLETCRVIAEAPQGSIAAYVISMAKVPSDVLAVHLLLKEAGCPFTLPVAPLFETLDDLNNADDVMTQLLGIDWYRGLIQGKQMVMIGYSDSAKDAGVMAASWAQYRAQDALIKTCEKAGITLTLFHGRGGSIGRGGAPAHAALLSQPPGSLKGGLRVTEQGEMIRFKFGLPEVTISSLALYAGAILEANLLPPPEPKKEWIEVMDLLSDASCDMYRSYVRENPEFVRYFRAATPELELGKLPLGSRPAKRRPDGGVESLRAIPWIFAWTQNRLMLPAWLGAGAGLQRAIDAGKQDVLATMCRDWPFFSTRIGMLEMVFAKADLWLAEYYDQRLVDKSLWPLGQQLRDQLAADIKVVLAIANDDHLMADLPWIAESIALRNVYTDPLNVLQAELLHRSRQQEHPDACVEQALMVTIAGVAAGMRNTG.

Active-site residues include His137 and Lys545.

It belongs to the PEPCase type 1 family. It depends on Mg(2+) as a cofactor.

The enzyme catalyses oxaloacetate + phosphate = phosphoenolpyruvate + hydrogencarbonate. Forms oxaloacetate, a four-carbon dicarboxylic acid source for the tricarboxylic acid cycle. The sequence is that of Phosphoenolpyruvate carboxylase from Yersinia pestis bv. Antiqua (strain Antiqua).